A 245-amino-acid polypeptide reads, in one-letter code: 6-carboxyhexanoate--CoA ligase (245 aa).

Belongs to the BioW family. Homodimer. It depends on Mg(2+) as a cofactor.

The enzyme catalyses heptanedioate + ATP + CoA = 6-carboxyhexanoyl-CoA + AMP + diphosphate. It participates in metabolic intermediate metabolism; pimeloyl-CoA biosynthesis; pimeloyl-CoA from pimelate: step 1/1. In terms of biological role, catalyzes the transformation of pimelate into pimeloyl-CoA with concomitant hydrolysis of ATP to AMP. This Thermodesulfovibrio yellowstonii (strain ATCC 51303 / DSM 11347 / YP87) protein is 6-carboxyhexanoate--CoA ligase.